The primary structure comprises 329 residues: Holliday junction branch migration complex subunit RuvB (329 aa).

Residues 1–181 (MNELLHQHKA…FGIPLHLEFY (181 aa)) form a large ATPase domain (RuvB-L) region. Leu-20, Arg-21, Gly-62, Lys-65, Thr-66, Thr-67, Arg-171, Tyr-181, and Arg-218 together coordinate ATP. Thr-66 contacts Mg(2+). Residues 182 to 252 (SVEELMLVIK…FADSALFNLG (71 aa)) are small ATPAse domain (RuvB-S). Positions 255–329 (KSGLDKMDIK…IEHLMNYKYI (75 aa)) are head domain (RuvB-H). DNA is bound by residues Arg-308 and Arg-313.

This sequence belongs to the RuvB family. Homohexamer. Forms an RuvA(8)-RuvB(12)-Holliday junction (HJ) complex. HJ DNA is sandwiched between 2 RuvA tetramers; dsDNA enters through RuvA and exits via RuvB. An RuvB hexamer assembles on each DNA strand where it exits the tetramer. Each RuvB hexamer is contacted by two RuvA subunits (via domain III) on 2 adjacent RuvB subunits; this complex drives branch migration. In the full resolvosome a probable DNA-RuvA(4)-RuvB(12)-RuvC(2) complex forms which resolves the HJ.

The protein localises to the cytoplasm. It carries out the reaction ATP + H2O = ADP + phosphate + H(+). In terms of biological role, the RuvA-RuvB-RuvC complex processes Holliday junction (HJ) DNA during genetic recombination and DNA repair, while the RuvA-RuvB complex plays an important role in the rescue of blocked DNA replication forks via replication fork reversal (RFR). RuvA specifically binds to HJ cruciform DNA, conferring on it an open structure. The RuvB hexamer acts as an ATP-dependent pump, pulling dsDNA into and through the RuvAB complex. RuvB forms 2 homohexamers on either side of HJ DNA bound by 1 or 2 RuvA tetramers; 4 subunits per hexamer contact DNA at a time. Coordinated motions by a converter formed by DNA-disengaged RuvB subunits stimulates ATP hydrolysis and nucleotide exchange. Immobilization of the converter enables RuvB to convert the ATP-contained energy into a lever motion, pulling 2 nucleotides of DNA out of the RuvA tetramer per ATP hydrolyzed, thus driving DNA branch migration. The RuvB motors rotate together with the DNA substrate, which together with the progressing nucleotide cycle form the mechanistic basis for DNA recombination by continuous HJ branch migration. Branch migration allows RuvC to scan DNA until it finds its consensus sequence, where it cleaves and resolves cruciform DNA. The sequence is that of Holliday junction branch migration complex subunit RuvB from Anaplasma phagocytophilum (strain HZ).